A 414-amino-acid polypeptide reads, in one-letter code: Lactosylceramide alpha-2,3-sialyltransferase (414 aa).

At 1–65 (MHTEAVGGAA…MRRPSLLIKD (65 aa)) the chain is on the cytoplasmic side. A helical; Signal-anchor for type II membrane protein transmembrane segment spans residues 66–86 (ICKCTLVAFGVWLLYILILNY). At 87 to 414 (TAEECDMKRM…VVEDLSGGIH (328 aa)) the chain is on the lumenal side. Cys-194 and Cys-352 are oxidised to a cystine. Asn-235, Asn-279, and Asn-389 each carry an N-linked (GlcNAc...) asparagine glycan.

Belongs to the glycosyltransferase 29 family. As to expression, mainly expressed in brain, and then testis, heart and liver, almost all tissues showed some levels of the gene expression.

The protein localises to the golgi apparatus membrane. It carries out the reaction a beta-D-Gal-(1-&gt;4)-beta-D-Glc-(1&lt;-&gt;1)-Cer(d18:1(4E)) + CMP-N-acetyl-beta-neuraminate = a ganglioside GM3 (d18:1(4E)) + CMP + H(+). It catalyses the reaction ganglioside GA2 (d18:1(4E)/18:0) + CMP-N-acetyl-beta-neuraminate = ganglioside GM2 (d18:1(4E)/18:0) + CMP + H(+). The enzyme catalyses a beta-D-Gal-(1&lt;-&gt;1')-ceramide + CMP-N-acetyl-beta-neuraminate = N-acetyl-alpha-neuraminosyl-(2-&gt;3)-beta-D-galactosyl-(1&lt;-&gt;1')-ceramide + CMP + H(+). The catalysed reaction is ganglioside GA1 (d18:1(4E)/18:0) + CMP-N-acetyl-beta-neuraminate = ganglioside GM1 (d18:1(4E)/18:0) + CMP + H(+). In terms of biological role, (Microbial infection) Gangliosides GD1b and GT1b (derived from GM3) may serve as receptors for some C.botulinum neurotoxins (minimally types BoNT/A, B, C). Functionally, transfers the sialyl group (N-acetyl-alpha-neuraminyl or NeuAc) from CMP-NeuAc to the non-reducing terminal galactose (Gal) of glycosphingolipids forming gangliosides (important molecules involved in the regulation of multiple cellular processes, including cell proliferation and differentiation, apoptosis, embryogenesis, development, and oncogenesis). Mainly involved in the biosynthesis of ganglioside GM3 but can also use different glycolipids as substrate acceptors such as D-galactosylceramide (GalCer), asialo-GM2 (GA2) and asialo-GM1 (GA1), although less preferentially than beta-D-Gal-(1-&gt;4)-beta-D-Glc-(1&lt;-&gt;1)-Cer (LacCer). The chain is Lactosylceramide alpha-2,3-sialyltransferase (St3gal5) from Mus musculus (Mouse).